The following is a 382-amino-acid chain: Lipid-A-disaccharide synthase (382 aa).

The protein belongs to the LpxB family.

It catalyses the reaction 2-N,3-O-bis[(3R)-3-hydroxytetradecanoyl]-alpha-D-glucosaminyl 1-phosphate + UDP-2-N,3-O-bis[(3R)-3-hydroxytetradecanoyl]-alpha-D-glucosamine = lipid A disaccharide (E. coli) + UDP + H(+). The enzyme catalyses a lipid X + a UDP-2-N,3-O-bis[(3R)-3-hydroxyacyl]-alpha-D-glucosamine = a lipid A disaccharide + UDP + H(+). Its pathway is glycolipid biosynthesis; lipid IV(A) biosynthesis; lipid IV(A) from (3R)-3-hydroxytetradecanoyl-[acyl-carrier-protein] and UDP-N-acetyl-alpha-D-glucosamine: step 5/6. Its function is as follows. Condensation of UDP-2,3-diacylglucosamine and 2,3-diacylglucosamine-1-phosphate to form lipid A disaccharide, a precursor of lipid A, a phosphorylated glycolipid that anchors the lipopolysaccharide to the outer membrane of the cell. The polypeptide is Lipid-A-disaccharide synthase (Escherichia coli O7:K1 (strain IAI39 / ExPEC)).